The following is a 279-amino-acid chain: Protein K1 (279 aa).

Positions 1–18 (MFLYVVCSLAVCFRGLLS) are cleaved as a signal peptide. The Extracellular portion of the chain corresponds to 19 to 220 (LSLQSSPNLC…TYLYIQEHLL (202 aa)). Residues 221–241 (VFMTLVALIGTMCGILGTIIF) traverse the membrane as a helical segment. Topologically, residues 242–279 (AHCQKQRDSNKTVPQQLQDYYSLHDLCTEDYTQPVDWY) are cytoplasmic.

Homooligomer.

Its subcellular location is the host membrane. Its function is as follows. Promotes host cell survival pathways and may contribute to pathogenesis by preventing infected cells from undergoing apoptosis. Acts in host B-cells by mimicking the activated B-cell receptor complex. The cytoplasmic tail of K1 can induce the phosphorylation of a number of different kinases, leading to the activation of survival signaling pathways. This is Protein K1 (K1) from Human herpesvirus 8 type P (isolate GK18) (HHV-8).